The primary structure comprises 397 residues: ATP-dependent RNA helicase eIF4A (397 aa).

The Q motif signature appears at D24–Q52. Residues I55–I225 enclose the Helicase ATP-binding domain. A68–T75 lines the ATP pocket. Residues D173–D176 carry the DEAD box motif. Residues G236–I397 enclose the Helicase C-terminal domain.

This sequence belongs to the DEAD box helicase family. eIF4A subfamily. Component of the eIF4F complex, which composition varies with external and internal environmental conditions. It is composed of at least eIF4A, eIF4E and eIF4G.

It is found in the cytoplasm. It carries out the reaction ATP + H2O = ADP + phosphate + H(+). Its function is as follows. ATP-dependent RNA helicase which is a subunit of the eIF4F complex involved in cap recognition and is required for mRNA binding to ribosome. In the current model of translation initiation, eIF4A unwinds RNA secondary structures in the 5'-UTR of mRNAs which is necessary to allow efficient binding of the small ribosomal subunit, and subsequent scanning for the initiator codon. This Chaetomium globosum (strain ATCC 6205 / CBS 148.51 / DSM 1962 / NBRC 6347 / NRRL 1970) (Soil fungus) protein is ATP-dependent RNA helicase eIF4A (TIF1).